A 345-amino-acid polypeptide reads, in one-letter code: Ribosome production factor 1 (345 aa).

2 disordered regions span residues 1–57 (MAKA…ISEI) and 70–105 (WKQQ…PKTI). The span at 87–97 (REREALGDKAP) shows a compositional bias: basic and acidic residues. The region spanning 142-325 (PKILITTSDR…LRSLQKGTFD (184 aa)) is the Brix domain. An RNA-binding region spans residues 303-320 (VGIQELGPRFTLKLRSLQ).

It localises to the nucleus. The protein localises to the nucleolus. May be required for ribosome biogenesis. This chain is Ribosome production factor 1 (Rpf1), found in Rattus norvegicus (Rat).